A 212-amino-acid polypeptide reads, in one-letter code: Thymidylate kinase (212 aa).

Residue 10-17 coordinates ATP; it reads GIDGCGKT.

Belongs to the thymidylate kinase family.

It catalyses the reaction dTMP + ATP = dTDP + ADP. In terms of biological role, phosphorylation of dTMP to form dTDP in both de novo and salvage pathways of dTTP synthesis. The protein is Thymidylate kinase of Synechococcus sp. (strain RCC307).